The chain runs to 367 residues: UDP-N-acetylglucosamine--N-acetylmuramyl-(pentapeptide) pyrophosphoryl-undecaprenol N-acetylglucosamine transferase (367 aa).

Residues 15 to 17 (TGG), asparagine 127, arginine 163, serine 191, isoleucine 249, and glutamine 294 contribute to the UDP-N-acetyl-alpha-D-glucosamine site.

Belongs to the glycosyltransferase 28 family. MurG subfamily.

It is found in the cell inner membrane. It carries out the reaction di-trans,octa-cis-undecaprenyl diphospho-N-acetyl-alpha-D-muramoyl-L-alanyl-D-glutamyl-meso-2,6-diaminopimeloyl-D-alanyl-D-alanine + UDP-N-acetyl-alpha-D-glucosamine = di-trans,octa-cis-undecaprenyl diphospho-[N-acetyl-alpha-D-glucosaminyl-(1-&gt;4)]-N-acetyl-alpha-D-muramoyl-L-alanyl-D-glutamyl-meso-2,6-diaminopimeloyl-D-alanyl-D-alanine + UDP + H(+). The protein operates within cell wall biogenesis; peptidoglycan biosynthesis. Functionally, cell wall formation. Catalyzes the transfer of a GlcNAc subunit on undecaprenyl-pyrophosphoryl-MurNAc-pentapeptide (lipid intermediate I) to form undecaprenyl-pyrophosphoryl-MurNAc-(pentapeptide)GlcNAc (lipid intermediate II). In Burkholderia orbicola (strain MC0-3), this protein is UDP-N-acetylglucosamine--N-acetylmuramyl-(pentapeptide) pyrophosphoryl-undecaprenol N-acetylglucosamine transferase.